A 248-amino-acid polypeptide reads, in one-letter code: Probable transcriptional regulatory protein Bind_0345 (248 aa).

It belongs to the TACO1 family.

Its subcellular location is the cytoplasm. The polypeptide is Probable transcriptional regulatory protein Bind_0345 (Beijerinckia indica subsp. indica (strain ATCC 9039 / DSM 1715 / NCIMB 8712)).